The sequence spans 1128 residues: Zinc finger protein 654 (1128 aa).

The interval 498–523 (GFDSLTDQSTGETDPDDVSGVQPKGH) is disordered. 5 consecutive C2H2-type zinc fingers follow at residues 572-594 (FACVICGRKFRNRGLMQKHLKNH), 746-771 (FKCPALGCVRIFKRIGFLNKHAMTVH), 787-809 (GKCKFCQRQFEDSQHFIDHLNRH), 815-839 (YFCLHFNCNESFKLPFQLAQHTKSH), and 844-868 (AQCSFPECHELFEDLPLLYEHEAQH). The tract at residues 891 to 951 (DSNPNQEKDS…GNERSDDTVS (61 aa)) is disordered. Composition is skewed to polar residues over residues 903–915 (NEKQTISLPVSTS) and 937–951 (SLVQNGNERSDDTVS). 2 positions are modified to phosphoserine: serine 1123 and serine 1127.

This sequence belongs to the krueppel C2H2-type zinc-finger protein family.

It is found in the nucleus. May be involved in transcriptional regulation. The chain is Zinc finger protein 654 from Homo sapiens (Human).